The sequence spans 1985 residues: Voltage-dependent L-type calcium channel subunit alpha-1F (1985 aa).

Residues 1–11 (MSESEVGKDTT) show a composition bias toward basic and acidic residues. Residues 1-56 (MSESEVGKDTTPEPSPANGTGPGPEWGLCPGPPTVGTDTSGASGLGTPRRRTQHNK) are disordered. At 1-92 (MSESEVGKDT…RSCISIVEWK (92 aa)) the chain is on the cytoplasmic side. The stretch at 79-375 (NPIRRSCISI…LVLGVLSGEF (297 aa)) is one I repeat. A helical membrane pass occupies residues 93-111 (PFDILILLTIFANCVALGV). Residues 112–129 (YIPFPEDDSNTANHNLEQ) lie on the Extracellular side of the membrane. The helical transmembrane segment at 130–149 (VEYVFLVIFTVETVLKIVAY) threads the bilayer. Residues 150–161 (GLVLHPSAYIRN) lie on the Cytoplasmic side of the membrane. A helical transmembrane segment spans residues 162 to 180 (GWNLLDFIIVVVGLFSVLL). Topologically, residues 181-201 (EQGPGRPGDAPHTGGKPGGFD) are extracellular. A helical transmembrane segment spans residues 202–220 (VKALRAFRVLRPLRLVSGV). The Cytoplasmic portion of the chain corresponds to 221–239 (PSLHIVVNSIMKALVPLLH). A helical transmembrane segment spans residues 240–259 (IALLVLFVIIIYAIIGLELF). Residues 260-347 (LGRMHKTCYF…WMQDAMGYEL (88 aa)) are Extracellular-facing. Residue Asn295 is glycosylated (N-linked (GlcNAc...) asparagine). Glu330 is a Ca(2+) binding site. Residues 348–372 (PWVYFVSLVIFGSFFVLNLVLGVLS) traverse the membrane as a helical segment. Over 373–529 (GEFSKEREKA…ARCRRAVKSN (157 aa)) the chain is Cytoplasmic. The segment at 395 to 412 (QQMEEDLRGYLDWITQAE) is binding to the beta subunit. The span at 455 to 469 (SHSTRSTHSTSSHAS) shows a compositional bias: low complexity. The disordered stretch occupies residues 455–490 (SHSTRSTHSTSSHASLPASDTGSMTDTPGDEDEEEG). The stretch at 515 to 761 (NRGLRARCRR…VFLAIAVDNL (247 aa)) is one II repeat. A helical transmembrane segment spans residues 530–549 (ACYWAVLLLVFLNTLTIASE). Over 550–564 (HHGQPLWLTQTQEYA) the chain is Extracellular. Residues 565-583 (NKVLLCLFTVEMLLKLYGL) traverse the membrane as a helical segment. At 584-591 (GPSVYVAS) the chain is on the cytoplasmic side. Residues 592-610 (FFNRFDCFVVCGGILETTL) traverse the membrane as a helical segment. The Extracellular segment spans residues 611–620 (VEVGAMQPLG). Residues 621-639 (ISVLRCVRLLRIFKVTRHW) traverse the membrane as a helical segment. Residues 640–658 (ASLSNLVASLLNSMKSIAS) lie on the Cytoplasmic side of the membrane. A helical membrane pass occupies residues 659–679 (LLLLLFLFIIIFSLLGMQLFG). Topologically, residues 680 to 733 (GKFNFDQTHTKRSTFDTFPQALLTVFQILTGEDWNVVMYDGIMAYGGPFFPGML) are extracellular. Glu711 contacts Ca(2+). A helical membrane pass occupies residues 734 to 758 (VCVYFIILFICGNYILLNVFLAIAV). At 759–876 (DNLASGDAGT…KACHTLIHHH (118 aa)) the chain is on the cytoplasmic side. The interval 766–834 (AGTAKDKGRE…EEEEENGAGH (69 aa)) is disordered. Residues 768-787 (TAKDKGREKSSEGNPPKENK) are compositionally biased toward basic and acidic residues. Residues 810–830 (MEEEEEEEEEEEEEEEEEEEN) are compositionally biased toward acidic residues. One copy of the III repeat lies at 858 to 1140 (CLSQTNPLRK…FFMMNIFVGF (283 aa)). Residues 877–895 (IFTSLILVFIILSSVSLAA) traverse the membrane as a helical segment. The Extracellular segment spans residues 896–911 (EDPIRAHSFRNHILGY). Residues 912–931 (FDYAFTSIFTVEILLKMTVF) traverse the membrane as a helical segment. Topologically, residues 932–943 (GAFLHRGSFCRS) are cytoplasmic. The chain crosses the membrane as a helical span at residues 944 to 962 (WFNLLDLLVVSVSLISFGI). Residues 963–968 (HSSAIS) lie on the Extracellular side of the membrane. A helical transmembrane segment spans residues 969 to 988 (VVKILRVLRVLRPLRAINRA). The Cytoplasmic segment spans residues 989 to 1007 (KGLKHVVQCVFVAIRTIGN). A helical transmembrane segment spans residues 1008 to 1027 (IMIVTTLLQFMFACIGVQLF). Topologically, residues 1028 to 1117 (KGKFYSCTDE…EGPIYNYHVE (90 aa)) are extracellular. A dihydropyridine binding region spans residues 1065-1155 (RLWVNSDFNF…RAQGEQEYQN (91 aa)). Ca(2+) is bound at residue Glu1091. Residues 1118–1138 (ISVFFIVYIIIIAFFMMNIFV) form a helical membrane-spanning segment. At 1139 to 1195 (GFVIITFRAQGEQEYQNCELDKNQRQCVEYALKAQPLRRYIPKNPHQYRVWATVNSR) the chain is on the cytoplasmic side. The stretch at 1182-1449 (NPHQYRVWAT…LFVAVIMDNF (268 aa)) is one IV repeat. A helical transmembrane segment spans residues 1196–1214 (AFEYLMFLLILLNTVALAM). The Extracellular segment spans residues 1215–1229 (QHYEQTAPFNYAMDI). Residues 1230–1249 (LNMVFTGLFTIEMVLKIIAF) form a helical membrane-spanning segment. Residues 1250–1256 (KPKHYFA) lie on the Cytoplasmic side of the membrane. Residues 1257 to 1278 (DAWNTFDALIVVGSVVDIAVTE) traverse the membrane as a helical segment. At 1279–1295 (VNNGGHLGESSEDTSRI) the chain is on the extracellular side. A helical transmembrane segment spans residues 1296 to 1315 (SITFFRLFRVMRLVKLLSKG). The Cytoplasmic segment spans residues 1316–1334 (EGIRTLLWTFIKSFQALPY). The helical transmembrane segment at 1335–1354 (VALLIAMIFFIYAVIGMQMF) threads the bilayer. At 1355–1421 (GLVALQDGTQ…GEEFTCGSSF (67 aa)) the chain is on the extracellular side. Residues 1402–1468 (RCDPESDFGP…LGPHHLDEFK (67 aa)) are dihydropyridine binding. Residues 1414–1457 (EFTCGSSFAIVYFISFFMLCAFLIINLFVAVIMDNFDYLTRDWS) form a phenylalkylamine binding region. The chain crosses the membrane as a helical span at residues 1422–1446 (AIVYFISFFMLCAFLIINLFVAVIM). The Cytoplasmic portion of the chain corresponds to 1447–1982 (DNFDYLTRDW…EDLGDEMACV (536 aa)). Disordered regions lie at residues 1643 to 1729 (VTEE…PHRR) and 1746 to 1778 (LKGT…SFEP). A compositionally biased stretch (acidic residues) spans 1644 to 1665 (TEEEEEEEEAVGQEAEEEEAEN). 2 stretches are compositionally biased toward polar residues: residues 1675–1687 (DSQP…SRIS) and 1713–1724 (NSRQPSVIQAGS). The segment covering 1767–1776 (DLDRAGRDSF) has biased composition (basic and acidic residues).

The protein belongs to the calcium channel alpha-1 subunit (TC 1.A.1.11) family. CACNA1F subfamily. As to quaternary structure, voltage-dependent calcium channels are multisubunit complexes, consisting of alpha-1, alpha-2, beta and delta subunits in a 1:1:1:1 ratio. The channel activity is directed by the pore-forming and voltage-sensitive alpha-1 subunit. In many cases, this subunit is sufficient to generate voltage-sensitive calcium channel activity. The auxiliary subunits beta and alpha-2/delta linked by a disulfide bridge regulate the channel activity. Interacts (via IQ domain) with CABP4; in a calcium independent manner. In terms of tissue distribution, expressed in the inner and outer nuclear layers and the genglion cell layer of the retina.

It is found in the membrane. The catalysed reaction is Ca(2+)(in) = Ca(2+)(out). Its function is as follows. Voltage-sensitive calcium channels (VSCC) mediate the entry of calcium ions into excitable cells and are also involved in a variety of calcium-dependent processes, including muscle contraction, hormone or neurotransmitter release, gene expression, cell motility, cell division and cell death. The isoform alpha-1F gives rise to L-type calcium currents. Long-lasting (L-type) calcium channels belong to the 'high-voltage activated' (HVA) group. They are blocked by dihydropyridines (DHP), phenylalkylamines, and by benzothiazepines. Activates at more negative voltages and does not undergo calcium-dependent inactivation (CDI), due to incoming calcium ions, during depolarization. The polypeptide is Voltage-dependent L-type calcium channel subunit alpha-1F (Mus musculus (Mouse)).